Consider the following 72-residue polypeptide: Translation initiation factor IF-1 (72 aa).

The 72-residue stretch at 1 to 72 (MSKEDSFEME…SKGRITYRAR (72 aa)) folds into the S1-like domain.

It belongs to the IF-1 family. In terms of assembly, component of the 30S ribosomal translation pre-initiation complex which assembles on the 30S ribosome in the order IF-2 and IF-3, IF-1 and N-formylmethionyl-tRNA(fMet); mRNA recruitment can occur at any time during PIC assembly.

It is found in the cytoplasm. Its function is as follows. One of the essential components for the initiation of protein synthesis. Stabilizes the binding of IF-2 and IF-3 on the 30S subunit to which N-formylmethionyl-tRNA(fMet) subsequently binds. Helps modulate mRNA selection, yielding the 30S pre-initiation complex (PIC). Upon addition of the 50S ribosomal subunit IF-1, IF-2 and IF-3 are released leaving the mature 70S translation initiation complex. This Pseudomonas savastanoi pv. phaseolicola (strain 1448A / Race 6) (Pseudomonas syringae pv. phaseolicola (strain 1448A / Race 6)) protein is Translation initiation factor IF-1.